The sequence spans 317 residues: WSCD family member AAEL009094 (317 aa).

A helical transmembrane segment spans residues 8-28 (LFGLAGTILVYIGGILFLSFV). N-linked (GlcNAc...) asparagine glycans are attached at residues N150, N226, and N232.

The protein belongs to the WSCD family.

It localises to the membrane. The polypeptide is WSCD family member AAEL009094 (Aedes aegypti (Yellowfever mosquito)).